We begin with the raw amino-acid sequence, 2073 residues long: Dedicator of cytokinesis protein 11 (2073 aa).

Ser12 carries the post-translational modification Phosphoserine. A Phosphothreonine modification is found at Thr16. Phosphoserine is present on residues Ser23 and Ser161. Residues 165-272 (GVIKQGWLHK…WLITLKKIIQ (108 aa)) enclose the PH domain. A Phosphotyrosine modification is found at Tyr248. A phosphoserine mark is found at Ser306, Ser440, and Ser445. In terms of domain architecture, C2 DOCK-type spans 640 to 818 (KNHLYVYPLQ…PLLKIKSHLE (179 aa)). Positions 1226 to 1267 (FQNGHGIKREDSRGSLIPEGATGFPDQGNTGENTRQSSTRSS) are disordered. Phosphoserine occurs at positions 1237 and 1240. The DOCKER domain maps to 1609–2036 (KSYASTPELR…LSDIIHEQIL (428 aa)).

This sequence belongs to the DOCK family. In terms of assembly, interacts with CDC42.

Guanine nucleotide-exchange factor (GEF) that activates CDC42 by exchanging bound GDP for free GTP. Required for marginal zone (MZ) B-cell development, is associated with early bone marrow B-cell development, MZ B-cell formation, MZ B-cell number and marginal metallophilic macrophages morphology. Facilitates filopodia formation through the activation of CDC42. In Homo sapiens (Human), this protein is Dedicator of cytokinesis protein 11.